We begin with the raw amino-acid sequence, 315 residues long: Cell division protein FtsZ (315 aa).

Residues 55–57 (GTG), E98, R102, and D146 contribute to the GTP site.

Belongs to the FtsZ family. As to quaternary structure, homodimer. Polymerizes to form a dynamic ring structure in a strictly GTP-dependent manner. Interacts directly with several other division proteins.

The protein localises to the cytoplasm. Its function is as follows. Essential cell division protein that forms a contractile ring structure (Z ring) at the future cell division site. The regulation of the ring assembly controls the timing and the location of cell division. One of the functions of the FtsZ ring is to recruit other cell division proteins to the septum to produce a new cell wall between the dividing cells. Binds GTP and shows GTPase activity. This chain is Cell division protein FtsZ, found in Wolbachia pipientis.